The primary structure comprises 265 residues: MKSVLGFKKAKVTQEKISMVTCYDYTLAKIINSTDIDCILVGDSGGMVLLGKKNTTYTTLDDMQFMTQAVANGATDKFIVADLPFMSYRQSLETTMQAVMALIQSGAHAIKLEGSSGNLDIIKHIVDSGVPVMGHIGMTPQFINSFGGFKVQGRTEEAAKHLLEEAKLLEQAGCFGIVLECIPANIAKDITQNLDIPTIGIGAGSNTDGQILVLQDMLGMNTDFQPKFVKKYIDGSKLFSDAINTYVKETKANTFPTKEHCYDYC.

Residues aspartate 43 and aspartate 82 each coordinate Mg(2+). 3-methyl-2-oxobutanoate is bound by residues 43–44 (DS), aspartate 82, and lysine 111. Glutamate 113 lines the Mg(2+) pocket. Residue glutamate 180 is the Proton acceptor of the active site.

It belongs to the PanB family. As to quaternary structure, homodecamer; pentamer of dimers. Mg(2+) serves as cofactor.

The protein resides in the cytoplasm. It carries out the reaction 3-methyl-2-oxobutanoate + (6R)-5,10-methylene-5,6,7,8-tetrahydrofolate + H2O = 2-dehydropantoate + (6S)-5,6,7,8-tetrahydrofolate. Its pathway is cofactor biosynthesis; (R)-pantothenate biosynthesis; (R)-pantoate from 3-methyl-2-oxobutanoate: step 1/2. In terms of biological role, catalyzes the reversible reaction in which hydroxymethyl group from 5,10-methylenetetrahydrofolate is transferred onto alpha-ketoisovalerate to form ketopantoate. In Francisella tularensis subsp. mediasiatica (strain FSC147), this protein is 3-methyl-2-oxobutanoate hydroxymethyltransferase.